A 518-amino-acid chain; its full sequence is Subtilisin-like serine protease Cla h 9.0101 (518 aa).

The first 16 residues, 1–16 (MRGALAGLSLATLATA), serve as a signal peptide directing secretion. The propeptide at 17–138 (SPVLVNSIHN…ERDQEVHVLG (122 aa)) is removed in mature form. The region spanning 44–136 (YMIKFKDHVT…LVERDQEVHV (93 aa)) is the Inhibitor I9 domain. A Peptidase S8 domain is found at 148–454 (PWGLARISHR…GGESNYSAIV (307 aa)). Active-site charge relay system residues include aspartate 184 and histidine 216. Residues 244 to 298 (RSNGSGSMSDVVKGVEYAAESHLEQVSITKKGKRKGFKGSTANMSLGGGKSPILD) are igE-binding. N-linked (GlcNAc...) asparagine glycosylation is found at asparagine 246 and asparagine 286. Serine 382 (charge relay system) is an active-site residue. Asparagine 449 carries an N-linked (GlcNAc...) asparagine glycan. Positions 460-518 (KATHRPTMLEEIESEAKVASKKVYSEGDELAHKVAELTEKVEDLIAGELKDMFRELKRE) are cleaved as a propeptide — removed in mature form.

The protein belongs to the peptidase S8 family.

Its function is as follows. Serine protease. The chain is Subtilisin-like serine protease Cla h 9.0101 from Davidiella tassiana (Mycosphaerella tassiana).